Here is a 499-residue protein sequence, read N- to C-terminus: Leukocyte immunoglobulin-like receptor subfamily A member 4 (499 aa).

Positions 1-23 (MTLILTSLLFFGLSLGPRTRVQA) are cleaved as a signal peptide. 4 Ig-like C2-type domains span residues 24–118 (ENLL…LVVT), 123–213 (PTLS…SDPL), 224–313 (PSLL…DPLD), and 324–413 (PSLS…SEPL). The Extracellular portion of the chain corresponds to 24-446 (ENLLKPILWA…PHLQDYTVEN (423 aa)). Cysteines 49 and 98 form a disulfide. The N-linked (GlcNAc...) asparagine glycan is linked to asparagine 138. A disulfide bond links cysteine 143 and cysteine 195. 3 N-linked (GlcNAc...) asparagine glycosylation sites follow: asparagine 239, asparagine 279, and asparagine 300. Cysteine 244 and cysteine 295 are oxidised to a cystine. Cysteine 344 and cysteine 395 form a disulfide bridge. Tyrosine 404 carries the 3'-nitrotyrosine modification. A helical membrane pass occupies residues 447-467 (LIRMGVAGLVLLFLGILLFEA). At 468–499 (QHSQRSPPRCSQEANSRKDNAPFRVVEPWEQI) the chain is on the cytoplasmic side.

As to quaternary structure, interacts with FCER1G; this stabilizes the expression of both proteins at the cell membrane. Interacts with BST2; leads to activation of LILRA4-mediated signaling and down-regulation of the innate immune response to viral pathogens. As to expression, detected on plasmacytoid dendritic cells (at protein level). Detected on plasmacytoid dendritic cells, but not on monocytes or B cells.

It localises to the cell membrane. Functions coreceptor to limit the innate immune responses to viral infections; signaling occurs via FCER1G. Down-regulates the production of IFNA1, IFNA2, IFNA4, IFNB1 and TNF by plasmacytoid dendritic cells that have been exposed to influenza virus or cytidine-phosphate-guanosine (CpG) dinucleotides, indicating it functions as a negative regulator of TLR7 and TLR9 signaling cascades. Down-regulates interferon production in response to interaction with BST2 on HIV-1 infected cells. Activates a signaling cascade in complex with FCER1G that results in phosphorylation of Src family and Syk kinases and thereby triggers mobilization of intracellular Ca(2+). Does not interfere with the differentiation of plasmacytoid dendritic cells into antigen-presenting cells. This Homo sapiens (Human) protein is Leukocyte immunoglobulin-like receptor subfamily A member 4.